Reading from the N-terminus, the 520-residue chain is Dual specificity tyrosine-phosphorylation-regulated kinase 4 (520 aa).

The segment at 1–32 (MPASELKASEIPFHPSIKTQDPKAEEKSPKKQ) is disordered. Positions 19-37 (TQDPKAEEKSPKKQKVTLT) match the Bipartite nuclear localization signal motif. Over residues 20-29 (QDPKAEEKSP) the composition is skewed to basic and acidic residues. A Protein kinase domain is found at 104–400 (YEVLETIGKG…PDQALKHAWI (297 aa)). ATP contacts are provided by residues 110–118 (IGKGSFGQV), lysine 133, and 183–186 (FELL). Aspartate 230 (proton acceptor) is an active-site residue. Tyrosine 264 is modified (phosphotyrosine; by autocatalysis). The segment at 404 to 467 (RNLKPQPRPQ…KHVQHSGDQQ (64 aa)) is disordered. Residues 439 to 457 (RKADEITKETTEKTKDSPT) are compositionally biased toward basic and acidic residues.

This sequence belongs to the protein kinase superfamily. CMGC Ser/Thr protein kinase family. MNB/DYRK subfamily. The cofactor is Mg(2+). In terms of processing, autophosphorylation on Tyr-264 in the activation loop is required for kinase activity.

It localises to the cytoplasm. The protein resides in the nucleus. The catalysed reaction is L-seryl-[protein] + ATP = O-phospho-L-seryl-[protein] + ADP + H(+). It carries out the reaction L-threonyl-[protein] + ATP = O-phospho-L-threonyl-[protein] + ADP + H(+). It catalyses the reaction L-tyrosyl-[protein] + ATP = O-phospho-L-tyrosyl-[protein] + ADP + H(+). Its function is as follows. Possible non-essential role in spermiogenesis. The polypeptide is Dual specificity tyrosine-phosphorylation-regulated kinase 4 (DYRK4) (Homo sapiens (Human)).